The chain runs to 249 residues: 5-amino-6-(5-phospho-D-ribitylamino)uracil phosphatase YcsE (249 aa).

Aspartate 16 serves as the catalytic Nucleophile. Aspartate 16 is a Mg(2+) binding site. Methionine 17 lines the phosphate pocket. Aspartate 18 lines the Mg(2+) pocket. Residues 50–51 (TG) and lysine 177 each bind phosphate. Mg(2+) contacts are provided by aspartate 200 and serine 201. Asparagine 203 is a binding site for phosphate.

It belongs to the HAD-like hydrolase superfamily. Cof family. Requires Mg(2+) as cofactor.

The enzyme catalyses 5-amino-6-(5-phospho-D-ribitylamino)uracil + H2O = 5-amino-6-(D-ribitylamino)uracil + phosphate. It participates in cofactor biosynthesis; riboflavin biosynthesis; 5-amino-6-(D-ribitylamino)uracil from GTP: step 4/4. In terms of biological role, catalyzes the dephosphorylation of the riboflavin precursor 5-amino-6-(5-phospho-D-ribitylamino)uracil and of flavin mononucleotide (FMN) in vitro. To a lesser extent, may also catalyze the dephosphorylation of a broad range of substrates such as phosphorylated sugars and triphosphate nucleotides in vitro. This chain is 5-amino-6-(5-phospho-D-ribitylamino)uracil phosphatase YcsE (ycsE), found in Bacillus subtilis (strain 168).